A 301-amino-acid polypeptide reads, in one-letter code: NADH-cytochrome b5 reductase 3 (301 aa).

Glycine 2 carries the N-myristoyl glycine lipid modification. In terms of domain architecture, FAD-binding FR-type spans 40–152 (DIKYPLRLID…RGPSGLLVYQ (113 aa)). Lysine 42 carries the post-translational modification N6-acetyllysine. At tyrosine 43 the chain carries Phosphotyrosine. Residues arginine 92, proline 93, tyrosine 94, valine 109, lysine 111, and phenylalanine 114 each contribute to the FAD site. At lysine 120 the chain carries N6-acetyllysine. FAD is bound by residues lysine 126, methionine 127, serine 128, and threonine 185.

It belongs to the flavoprotein pyridine nucleotide cytochrome reductase family. In terms of assembly, component of a complex composed of cytochrome b5, NADH-cytochrome b5 reductase (CYB5R3) and MTARC2. Interacts with MTLN; the interaction is required to maintain cellular lipid composition and leads to stimulation of mitochondrial respiratory complex I activity. FAD is required as a cofactor. Expressed at late stages of erythroid maturation.

It is found in the endoplasmic reticulum membrane. Its subcellular location is the mitochondrion outer membrane. The protein resides in the cytoplasm. The catalysed reaction is 2 Fe(III)-[cytochrome b5] + NADH = 2 Fe(II)-[cytochrome b5] + NAD(+) + H(+). In terms of biological role, catalyzes the reduction of two molecules of cytochrome b5 using NADH as the electron donor. The protein is NADH-cytochrome b5 reductase 3 of Homo sapiens (Human).